A 255-amino-acid chain; its full sequence is Reticulon-like protein B3 (255 aa).

Basic and acidic residues predominate over residues 1–25 (MAEEHKHEESIMEKISEKIHGHDDS). The interval 1–38 (MAEEHKHEESIMEKISEKIHGHDDSSSSSSDSDDDKNS) is disordered. Ala-2 is subject to N-acetylalanine. The 192-residue stretch at 64–255 (PADIFLWRNK…GAFAFIKKKD (192 aa)) folds into the Reticulon domain. 3 helical membrane passes run 75–95 (VSGG…LLEY), 97–117 (LLTL…LWSS), and 186–206 (CNFL…PVLY).

Its subcellular location is the endoplasmic reticulum membrane. It is found in the vacuole membrane. This chain is Reticulon-like protein B3 (RTNLB3), found in Arabidopsis thaliana (Mouse-ear cress).